Reading from the N-terminus, the 182-residue chain is Dirigent protein 5 (182 aa).

Positions 1–23 (MVGQMKSFLFLFVFLVLTKTVIS) are cleaved as a signal peptide. A disulfide bridge connects residues Cys-35 and Cys-181. Residues Asn-54 and Asn-118 are each glycosylated (N-linked (GlcNAc...) asparagine).

It belongs to the plant dirigent protein family. In terms of assembly, homodimer. Confined to shoot meristem, vascular region of cotyledons and siliques abscission zone.

It is found in the secreted. The protein resides in the extracellular space. Its subcellular location is the apoplast. Its function is as follows. Dirigent proteins impart stereoselectivity on the phenoxy radical-coupling reaction, yielding optically active lignans from two molecules of coniferyl alcohol in the biosynthesis of lignans, flavonolignans, and alkaloids and thus plays a central role in plant secondary metabolism. Enantiocomplementary dirigent protein that mediates the laccase-catalyzed enantioselective oxidative phenol coupling of (E)-coniferyl alcohol to (-)-pinoresinol. This chain is Dirigent protein 5 (DIR5), found in Arabidopsis thaliana (Mouse-ear cress).